We begin with the raw amino-acid sequence, 445 residues long: MSNRKYFGTDGIRGRVGDAPITPDFVLKLGWAAGKVLARHGSRKIIIGKDTRISGYMLESALEAGLAAAGLSALFTGPMPTPAVAYLTRTFRAEAGIVISASHNPFYDNGIKFFSIDGTKLPDAVEEAIEAEMEKEISCVDSAELGKASRIVDAAGRYIEFCKATFPNELSLSELKIVVDCANGATYHIAPNVLRELGANVIAIGCEPNGVNINAEVGATDVRALQARVLAEKADLGIAFDGDGDRVIMVDHEGNKVDGDQIMYIIAREGLRQGQLRGGAVGTLMSNMGLELALKQLGIPFARAKVGDRYVLEKMQEKGWRIGAENSGHVILLDKTTTGDGIVAGLQVLAAMARNHMSLHDLCSGMKMFPQILVNVRYTAGSGDPLEHESVKAVTAEVEAALGSRGRVLLRKSGTEPLIRVMVEGEDEAQVTEFAHRIADAVKAV.

The active-site Phosphoserine intermediate is the Ser-102. Mg(2+) is bound by residues Ser-102, Asp-241, Asp-243, and Asp-245. A Phosphoserine modification is found at Ser-102.

This sequence belongs to the phosphohexose mutase family. Mg(2+) serves as cofactor. Post-translationally, activated by phosphorylation.

It carries out the reaction alpha-D-glucosamine 1-phosphate = D-glucosamine 6-phosphate. Functionally, catalyzes the conversion of glucosamine-6-phosphate to glucosamine-1-phosphate. This chain is Phosphoglucosamine mutase, found in Escherichia coli O127:H6 (strain E2348/69 / EPEC).